The sequence spans 456 residues: tRNA modification GTPase MnmE (456 aa).

(6S)-5-formyl-5,6,7,8-tetrahydrofolate is bound by residues Arg-23, Glu-80, and Lys-122. The TrmE-type G domain maps to 218 to 380 (AKRIVIVGPP…LKKHLSNRQK (163 aa)). K(+) is bound at residue Asn-228. Residues 228-233 (NAGKSS), 247-253 (TDLPGTT), and 272-275 (DTAG) each bind GTP. Ser-232 provides a ligand contact to Mg(2+). K(+)-binding residues include Thr-247, Leu-249, and Thr-252. Thr-253 provides a ligand contact to Mg(2+). Residue Lys-456 participates in (6S)-5-formyl-5,6,7,8-tetrahydrofolate binding.

This sequence belongs to the TRAFAC class TrmE-Era-EngA-EngB-Septin-like GTPase superfamily. TrmE GTPase family. As to quaternary structure, homodimer. Heterotetramer of two MnmE and two MnmG subunits. It depends on K(+) as a cofactor.

Its subcellular location is the cytoplasm. Functionally, exhibits a very high intrinsic GTPase hydrolysis rate. Involved in the addition of a carboxymethylaminomethyl (cmnm) group at the wobble position (U34) of certain tRNAs, forming tRNA-cmnm(5)s(2)U34. This Buchnera aphidicola subsp. Schizaphis graminum (strain Sg) protein is tRNA modification GTPase MnmE.